The chain runs to 125 residues: UPF0102 protein Rpic_3463 (125 aa).

Belongs to the UPF0102 family.

The polypeptide is UPF0102 protein Rpic_3463 (Ralstonia pickettii (strain 12J)).